The sequence spans 163 residues: Lipoprotein signal peptidase (163 aa).

The next 3 helical transmembrane spans lie at 11–31 (ILIA…IATT), 63–83 (KMTF…YFFI), and 88–108 (YNLF…GNFI). Residues Asp118 and Asp136 contribute to the active site. The chain crosses the membrane as a helical span at residues 131–151 (IFNIADSSLTIGVILIIIALL).

This sequence belongs to the peptidase A8 family.

The protein localises to the cell membrane. It catalyses the reaction Release of signal peptides from bacterial membrane prolipoproteins. Hydrolyzes -Xaa-Yaa-Zaa-|-(S,diacylglyceryl)Cys-, in which Xaa is hydrophobic (preferably Leu), and Yaa (Ala or Ser) and Zaa (Gly or Ala) have small, neutral side chains.. It functions in the pathway protein modification; lipoprotein biosynthesis (signal peptide cleavage). Functionally, this protein specifically catalyzes the removal of signal peptides from prolipoproteins. The chain is Lipoprotein signal peptidase from Staphylococcus aureus.